Reading from the N-terminus, the 390-residue chain is MGVDLQVTVNLDHPELLDAPVLETGVLSAEGRALPTPPRPRIVGVGTAVTRTSYSQQEVLDAFGITDRKVRSIFLNSAIERRNLTLPPMDSDSVRVSESQGDLLDKHKKLAIEMGAEALHACLKRCGAELSDLRHLCCVTSTGFLTPGLSALLIRELGIDRHCSRSDIVGMGCNAGLNALNVVAGWSAAHPGELAVVLCAEACSAAYTMDSTMRTAVVNSLFGDGAAAVALLAGPGGATPATSEGPTVLKFASCIIPEAVDAMRYDWDRTQGRFSFFLDPQIPYVVGAHAETVVDRLLSGTGLRRSDIGHWLVHSGGKKVIDAVVVNLGLTRHDVRHTIGVLRDQGNVSSGSFLFSYERLLEEGITRPGEYGVLMTMGPGSTIETALVQW.

Residue Cys-173 is part of the active site.

It belongs to the thiolase-like superfamily. Chalcone/stilbene synthases family.

The catalysed reaction is 4 malonyl-CoA + 4 H(+) = (3,5-dihydroxyphenyl)acetyl-CoA + 4 CO2 + 3 CoA + H2O. It functions in the pathway antibiotic biosynthesis; vancomycin biosynthesis. In terms of biological role, involved in the biosynthesis of the nonproteinogenic amino acid monomer (S)-3,5-dihydroxyphenylglycine (Dpg) responsible of the production of vancomycin and teicoplanin antibiotics. Catalyzes the Claisen condensation of four molecules of malonyl-CoA to yield 3,5-dihydroxyphenylacetyl-CoA (DPA-CoA) and three free coenzyme A (CoA). DpgA requires the presence of the dehydratases DpgB and DpgD to facilitate the aromatization of the DPA-S-DgpA or DPA-S-CoA intermediate. In Streptomyces toyocaensis, this protein is 3,5-dihydroxyphenylacetyl-CoA synthase.